A 668-amino-acid polypeptide reads, in one-letter code: SH2 domain-containing protein B (668 aa).

The tract at residues 373-411 (SVSGSEESYQQCNSHPQTSRQFENGNGMRLHEEDNSSID) is disordered. Over residues 374 to 396 (VSGSEESYQQCNSHPQTSRQFEN) the composition is skewed to polar residues. Residues 574-642 (WIEGFITKEE…DNICESSERY (69 aa)) form the SH2 domain.

Post-translationally, phosphorylated on tyrosine residues. As to expression, expressed in roots, leaves, stems and flowers.

The sequence is that of SH2 domain-containing protein B from Arabidopsis thaliana (Mouse-ear cress).